We begin with the raw amino-acid sequence, 663 residues long: Transmembrane 9 superfamily member 2 (663 aa).

The N-terminal stretch at 1-28 (MSSRPPASLPARGPRLLLLSLLLLGTVP) is a signal peptide. At 29–300 (GPRPGSAFYL…LESMPHTHIQ (272 aa)) the chain is on the lumenal side. Residues 301–321 (WFSIMNSLVIVLFLSGMVAMI) form a helical membrane-spanning segment. Over 322-374 (MLRTLHKDIARYNQMDSTEDAQEEFGWKLVHGDIFRPPRKGMLLSVFLGSGTQ) the chain is Cytoplasmic. The helical transmembrane segment at 375–395 (ILIMTFVTLFFACLGFLSPAN) threads the bilayer. Residues 396–398 (RGA) lie on the Lumenal side of the membrane. A helical membrane pass occupies residues 399-419 (LMTCAVVLWVLLGTPAGYVAA). At 420–437 (RFYKSFGGEKWKTNVLLT) the chain is on the cytoplasmic side. The chain crosses the membrane as a helical span at residues 438-458 (SFLCPGIVFADFFIMNLILWG). The Lumenal segment spans residues 459–466 (EGSSAAIP). The chain crosses the membrane as a helical span at residues 467–487 (FGTLVAILALWFCISVPLTFI). The Cytoplasmic portion of the chain corresponds to 488–522 (GAYFGFKKNAIEHPVRTNQIPRQIPEQSFYTKPLP). Residues 523–543 (GIIMGGILPFGCIFIQLFFIL) traverse the membrane as a helical segment. Residues 544–554 (NSIWSHQMYYM) lie on the Lumenal side of the membrane. Residues 555 to 575 (FGFLFLVFIILVITCSEATIL) traverse the membrane as a helical segment. At 576–591 (LCYFHLCAEDYHWQWR) the chain is on the cytoplasmic side. A helical transmembrane segment spans residues 592 to 612 (SFLTSGFTAVYFLVYAIHYFF). The Lumenal segment spans residues 613 to 631 (SKLQITGTASTILYFGYTM). Residues 632 to 652 (IMVLIFFLFTGTIGFFACFWF) traverse the membrane as a helical segment. The Cytoplasmic portion of the chain corresponds to 653–663 (VTKIYSVVKVD).

Belongs to the nonaspanin (TM9SF) (TC 9.A.2) family.

It localises to the endosome membrane. Its subcellular location is the golgi outpost. The protein localises to the cytoplasm. It is found in the cytoskeleton. The protein resides in the microtubule organizing center. Its function is as follows. In the intracellular compartments, may function as a channel or small molecule transporter. In Rattus norvegicus (Rat), this protein is Transmembrane 9 superfamily member 2 (Tm9sf2).